A 415-amino-acid chain; its full sequence is uncharacterized protein (415 aa).

A Zn(2+)-binding site is contributed by histidine 88. Aspartate 90 is an active-site residue. Position 121 (aspartate 121) interacts with Zn(2+). Catalysis depends on glutamate 155, which acts as the Proton acceptor. Positions 156, 185, and 392 each coordinate Zn(2+).

It belongs to the peptidase M20A family. It depends on Zn(2+) as a cofactor. The cofactor is Co(2+).

This is an uncharacterized protein from Methanococcus maripaludis (strain DSM 14266 / JCM 13030 / NBRC 101832 / S2 / LL).